The chain runs to 104 residues: Class I hydrophobin 4 (104 aa).

Positions 1 to 16 (MFASTVFVSLLAVAAA) are cleaved as a signal peptide. Disulfide bonds link C26/C85, C34/C79, C35/C61, and C86/C99.

Belongs to the fungal hydrophobin family. In terms of assembly, self-assembles to form functional amyloid fibrils called rodlets. Self-assembly into fibrillar rodlets occurs spontaneously at hydrophobic:hydrophilic interfaces and the rodlets further associate laterally to form amphipathic monolayers.

Its subcellular location is the secreted. It localises to the cell wall. Its function is as follows. Aerial growth, conidiation, and dispersal of filamentous fungi in the environment rely upon a capability of their secreting small amphipathic proteins called hydrophobins (HPBs) with low sequence identity. Class I can self-assemble into an outermost layer of rodlet bundles on aerial cell surfaces, conferring cellular hydrophobicity that supports fungal growth, development and dispersal; whereas Class II form highly ordered films at water-air interfaces through intermolecular interactions but contribute nothing to the rodlet structure. HYD4 is a class I hydrophobin that negatively regulates aerial mycelial growth, conidiation, carotenoid and adenosine synthesis, resistance to oxidant stress, and fruiting body development. Seems not to be involved in the mycelial growth rate, the hydrophobicity of the mycelia and conidia, nor the conidial virulence on silkworm pupae. The polypeptide is Class I hydrophobin 4 (Cordyceps militaris (Caterpillar fungus)).